Reading from the N-terminus, the 160-residue chain is Major pollen allergen Bet v 1-C (160 aa).

Residues lysine 55, tyrosine 82, tyrosine 84, and asparagine 101 each contribute to the brassinolide site.

The protein belongs to the BetVI family.

The protein resides in the cytoplasm. In terms of biological role, may be a general steroid carrier protein. In Betula pendula (European white birch), this protein is Major pollen allergen Bet v 1-C (BETV1C).